The sequence spans 223 residues: Pyridoxine/pyridoxamine 5'-phosphate oxidase (223 aa).

Substrate is bound by residues Arg8–Tyr11 and Lys65. Residues Arg60–Lys65, Tyr75–Thr76, Arg81, Lys82, and Gln104 each bind FMN. Substrate-binding residues include Tyr122, Arg126, and Ser130. FMN contacts are provided by residues Gln139–Ser140 and Trp188. Residue Arg194–His196 participates in substrate binding. Residue Arg198 participates in FMN binding.

It belongs to the pyridoxamine 5'-phosphate oxidase family. In terms of assembly, homodimer. FMN is required as a cofactor.

It carries out the reaction pyridoxamine 5'-phosphate + O2 + H2O = pyridoxal 5'-phosphate + H2O2 + NH4(+). The catalysed reaction is pyridoxine 5'-phosphate + O2 = pyridoxal 5'-phosphate + H2O2. It participates in cofactor metabolism; pyridoxal 5'-phosphate salvage; pyridoxal 5'-phosphate from pyridoxamine 5'-phosphate: step 1/1. The protein operates within cofactor metabolism; pyridoxal 5'-phosphate salvage; pyridoxal 5'-phosphate from pyridoxine 5'-phosphate: step 1/1. Functionally, catalyzes the oxidation of either pyridoxine 5'-phosphate (PNP) or pyridoxamine 5'-phosphate (PMP) into pyridoxal 5'-phosphate (PLP). This chain is Pyridoxine/pyridoxamine 5'-phosphate oxidase, found in Kineococcus radiotolerans (strain ATCC BAA-149 / DSM 14245 / SRS30216).